A 22-amino-acid polypeptide reads, in one-letter code: SNKKNYQKEIVDKHNALRRSVK.

Positions 1–15 (SNKKNYQKEIVDKHN) are enriched in basic and acidic residues. Positions 1 to 22 (SNKKNYQKEIVDKHNALRRSVK) are disordered.

It belongs to the CRISP family. Post-translationally, contains 8 disulfide bonds. Expressed by the venom gland.

Its subcellular location is the secreted. In Pseudechis colletti (Collett's snake), this protein is Cysteine-rich venom protein collettin-a.